The following is a 326-amino-acid chain: Thioredoxin reductase (326 aa).

FAD is bound at residue 55 to 62; it reads EGPEPGGQ. Cysteines 156 and 159 form a disulfide. 298 to 307 is an FAD binding site; sequence DVSNKLYAQA.

Belongs to the class-II pyridine nucleotide-disulfide oxidoreductase family. In terms of assembly, homodimer. FAD serves as cofactor.

The protein resides in the cytoplasm. The catalysed reaction is [thioredoxin]-dithiol + NADP(+) = [thioredoxin]-disulfide + NADPH + H(+). The polypeptide is Thioredoxin reductase (trxB) (Borreliella burgdorferi (strain ATCC 35210 / DSM 4680 / CIP 102532 / B31) (Borrelia burgdorferi)).